An 83-amino-acid chain; its full sequence is Small ribosomal subunit protein bS20 (83 aa).

This sequence belongs to the bacterial ribosomal protein bS20 family.

In terms of biological role, binds directly to 16S ribosomal RNA. In Lactobacillus delbrueckii subsp. bulgaricus (strain ATCC 11842 / DSM 20081 / BCRC 10696 / JCM 1002 / NBRC 13953 / NCIMB 11778 / NCTC 12712 / WDCM 00102 / Lb 14), this protein is Small ribosomal subunit protein bS20.